A 143-amino-acid chain; its full sequence is 3-hydroxyacyl-[acyl-carrier-protein] dehydratase FabZ (143 aa).

Residue H49 is part of the active site.

It belongs to the thioester dehydratase family. FabZ subfamily.

It is found in the cytoplasm. The enzyme catalyses a (3R)-hydroxyacyl-[ACP] = a (2E)-enoyl-[ACP] + H2O. Functionally, involved in unsaturated fatty acids biosynthesis. Catalyzes the dehydration of short chain beta-hydroxyacyl-ACPs and long chain saturated and unsaturated beta-hydroxyacyl-ACPs. In Wolbachia pipientis wMel, this protein is 3-hydroxyacyl-[acyl-carrier-protein] dehydratase FabZ.